We begin with the raw amino-acid sequence, 279 residues long: Diaminopimelate epimerase (279 aa).

2 residues coordinate substrate: N14 and Q68. C77 serves as the catalytic Proton donor. Substrate-binding positions include 78 to 79 (GN), N191, and 207 to 208 (ER). C217 functions as the Proton acceptor in the catalytic mechanism. Substrate is bound at residue 218 to 219 (GT).

Belongs to the diaminopimelate epimerase family. Homodimer.

It localises to the cytoplasm. It carries out the reaction (2S,6S)-2,6-diaminopimelate = meso-2,6-diaminopimelate. The protein operates within amino-acid biosynthesis; L-lysine biosynthesis via DAP pathway; DL-2,6-diaminopimelate from LL-2,6-diaminopimelate: step 1/1. Functionally, catalyzes the stereoinversion of LL-2,6-diaminopimelate (L,L-DAP) to meso-diaminopimelate (meso-DAP), a precursor of L-lysine. The sequence is that of Diaminopimelate epimerase from Methanothrix thermoacetophila (strain DSM 6194 / JCM 14653 / NBRC 101360 / PT) (Methanosaeta thermophila).